The following is a 218-amino-acid chain: 3,4-dihydroxy-2-butanone 4-phosphate synthase (218 aa).

D-ribulose 5-phosphate is bound by residues 38-39 (RE), Asp43, 151-155 (RRGHT), and Glu175. Position 39 (Glu39) interacts with Mg(2+). Residue His154 participates in Mg(2+) binding.

This sequence belongs to the DHBP synthase family. In terms of assembly, homodimer. Mg(2+) is required as a cofactor. Mn(2+) serves as cofactor.

It carries out the reaction D-ribulose 5-phosphate = (2S)-2-hydroxy-3-oxobutyl phosphate + formate + H(+). The protein operates within cofactor biosynthesis; riboflavin biosynthesis; 2-hydroxy-3-oxobutyl phosphate from D-ribulose 5-phosphate: step 1/1. In terms of biological role, catalyzes the conversion of D-ribulose 5-phosphate to formate and 3,4-dihydroxy-2-butanone 4-phosphate. This is 3,4-dihydroxy-2-butanone 4-phosphate synthase from Shewanella frigidimarina (strain NCIMB 400).